Here is a 70-residue protein sequence, read N- to C-terminus: Large ribosomal subunit protein bL28 (70 aa).

It belongs to the bacterial ribosomal protein bL28 family.

The protein is Large ribosomal subunit protein bL28 of Thermosipho melanesiensis (strain DSM 12029 / CIP 104789 / BI429).